Consider the following 295-residue polypeptide: GDP-polyphosphate phosphotransferase (295 aa).

The tract at residues 1–28 is disordered; it reads MDIPSVDVSTATNDGASSRAKGHRSAAP. The span at 7 to 16 shows a compositional bias: polar residues; sequence DVSTATNDGA. A phosphohistidine mark is found at His115 and His247.

It belongs to the polyphosphate kinase 2 (PPK2) family. Class I subfamily. In terms of assembly, interacts with Ndk. Post-translationally, autophosphorylated at His-115 and His-247 using polyP as a phosphate donor.

The enzyme catalyses [phosphate](n) + GTP = [phosphate](n+1) + GDP. In terms of biological role, uses inorganic polyphosphate (polyP) as a donor to convert GDP to GTP. In addition, modulates nucleotide triphosphate synthesis catalyzed by the nucleoside diphosphate kinase (Ndk) in favor of GTP production over CTP or UTP. Plays an important role in survival of M.tuberculosis in macrophages. This Mycobacterium tuberculosis (strain ATCC 25618 / H37Rv) protein is GDP-polyphosphate phosphotransferase.